A 571-amino-acid polypeptide reads, in one-letter code: Methionine--tRNA ligase (571 aa).

Residues 10–20 (PYVNAVPHLGN) carry the 'HIGH' region motif. C143, C146, C156, and C159 together coordinate Zn(2+). The 'KMSKS' region signature appears at 333–337 (KFSKS). K336 contributes to the ATP binding site.

This sequence belongs to the class-I aminoacyl-tRNA synthetase family. MetG type 1 subfamily. Zn(2+) is required as a cofactor.

Its subcellular location is the cytoplasm. It carries out the reaction tRNA(Met) + L-methionine + ATP = L-methionyl-tRNA(Met) + AMP + diphosphate. Is required not only for elongation of protein synthesis but also for the initiation of all mRNA translation through initiator tRNA(fMet) aminoacylation. This chain is Methionine--tRNA ligase, found in Sulfolobus acidocaldarius (strain ATCC 33909 / DSM 639 / JCM 8929 / NBRC 15157 / NCIMB 11770).